The chain runs to 921 residues: MRRQPAASRDLFAQEPVPPGSGDGALQDALLSLGSVIDVAGLQQAVKEALSAVLPKVETVYTYLLDGESRLVCEEPPHELPQEGKVREAVISRKRLGCNGLGPSDLPGKPLARLVAPLAPDTQVLVIPLVDKEAGAVAAVILVHCGQLSDNEEWSLQAVEKHTLVALKRVQALQQRESSVAPEATQNPPEEAAGDQKGGVAYTNQDRKILQLCGELYDLDASSLQLKVLQYLQQETQASRCCLLLVSEDNLQLSCKVIGDKVLEEEISFPLTTGRLGQVVEDKKSIQLKDLTSEDMQQLQSMLGCEVQAMLCVPVISRATDQVVALACAFNKLGGDLFTDQDEHVIQHCFHYTSTVLTSTLAFQKEQKLKCECQALLQVAKNLFTHLDDVSVLLQEIITEARNLSNAEICSVFLLDQNELVAKVFDGGVVEDESYEIRIPADQGIAGHVATTGQILNIPDAYAHPLFYRGVDDSTGFRTRNILCFPIKNENQEVIGVAELVNKINGPWFSKFDEDLATAFSIYCGISIAHSLLYKKVNEAQYRSHLANEMMMYHMKVSDDEYTKLLHDGIQPVAAIDSNFASFTYTPRSLPEDDTSMAILSMLQDMNFINNYKIDCPTLARFCLMVKKGYRDPPYHNWMHAFSVSHFCYLLYKNLELTNYLEDMEIFALFISCMCHDLDHRGTNNSFQVASKSVLAALYSSEGSVMERHHFAQAIAILNTHGCNIFDHFSRKDYQRMLDLMRDIILATDLAHHLRIFKDLQKMAEVGYDRTNKQHHSLLLCLLMTSCDLSDQTKGWKTTRKIAELIYKEFFSQGDLEKAMGNRPMEMMDREKAYIPELQISFMEHIAMPIYKLLQDLFPKAAELYERVASNREHWTKVSHKFTIRGLPSNNSLDFLDEEYEVPDLDGARAPINGCCSLDAE.

Methionine 1 is subject to N-acetylmethionine. Disordered stretches follow at residues 1 to 21 and 177 to 198; these read MRRQ…PPGS and ESSV…DQKG. A compositionally biased stretch (polar residues) spans 177-188; the sequence is ESSVAPEATQNP. 2 consecutive GAF domains span residues 220-357 and 389-528; these read DASS…STVL and DVSV…GISI. 5 residues coordinate 3',5'-cyclic GMP: serine 411, aspartate 426, isoleucine 445, tyrosine 468, and threonine 479. The PDEase domain maps to 558–882; it reads SDDEYTKLLH…EHWTKVSHKF (325 aa). Histidine 636 acts as the Proton donor in catalysis. Zn(2+)-binding residues include histidine 640, histidine 676, aspartate 677, and aspartate 788. Residue aspartate 677 participates in Mg(2+) binding.

This sequence belongs to the cyclic nucleotide phosphodiesterase family. PDE2 subfamily. In terms of assembly, homodimer. Zn(2+) is required as a cofactor. Mg(2+) serves as cofactor.

The protein localises to the cell membrane. The protein resides in the cytoplasm. Its subcellular location is the mitochondrion. It localises to the mitochondrion inner membrane. It is found in the mitochondrion outer membrane. The enzyme catalyses a nucleoside 3',5'-cyclic phosphate + H2O = a nucleoside 5'-phosphate + H(+). The catalysed reaction is 3',5'-cyclic GMP + H2O = GMP + H(+). It catalyses the reaction 3',5'-cyclic AMP + H2O = AMP + H(+). Its activity is regulated as follows. The 3',5'-cyclic-AMP phosphodiesterase activity is stimulated by 3',5'-cyclic GMP. Functionally, cGMP-activated cyclic nucleotide phosphodiesterase with a dual-specificity for the second messengers cAMP and cGMP, which are key regulators of many important physiological processes. Has a higher efficiency with cGMP compared to cAMP. Plays a role in cell growth and migration. Regulates mitochondrial cAMP levels and respiration. Involved in the regulation of mitochondria morphology/dynamics and apoptotic cell death via local modulation of cAMP/PKA signaling in the mitochondrion, including the monitoring of local cAMP levels at the outer mitochondrial membrane and of PKA-dependent phosphorylation of DNM1L. The protein is cGMP-dependent 3',5'-cyclic phosphodiesterase of Bos taurus (Bovine).